The chain runs to 430 residues: Enolase (430 aa).

Gln165 lines the (2R)-2-phosphoglycerate pocket. Catalysis depends on Glu207, which acts as the Proton donor. Asp244, Glu287, and Asp314 together coordinate Mg(2+). (2R)-2-phosphoglycerate is bound by residues Lys339, Arg368, Ser369, and Lys390. The active-site Proton acceptor is the Lys339.

Belongs to the enolase family. In terms of assembly, component of the RNA degradosome, a multiprotein complex involved in RNA processing and mRNA degradation. Requires Mg(2+) as cofactor.

The protein resides in the cytoplasm. The protein localises to the secreted. Its subcellular location is the cell surface. It carries out the reaction (2R)-2-phosphoglycerate = phosphoenolpyruvate + H2O. The protein operates within carbohydrate degradation; glycolysis; pyruvate from D-glyceraldehyde 3-phosphate: step 4/5. In terms of biological role, catalyzes the reversible conversion of 2-phosphoglycerate (2-PG) into phosphoenolpyruvate (PEP). It is essential for the degradation of carbohydrates via glycolysis. This is Enolase from Xanthomonas euvesicatoria pv. vesicatoria (strain 85-10) (Xanthomonas campestris pv. vesicatoria).